We begin with the raw amino-acid sequence, 833 residues long: Leucine--tRNA ligase (833 aa).

Positions 41–52 (PYPSGAGLHVGH) match the 'HIGH' region motif. Positions 610–614 (KMSKS) match the 'KMSKS' region motif. Position 613 (Lys613) interacts with ATP.

This sequence belongs to the class-I aminoacyl-tRNA synthetase family.

The protein localises to the cytoplasm. It carries out the reaction tRNA(Leu) + L-leucine + ATP = L-leucyl-tRNA(Leu) + AMP + diphosphate. The sequence is that of Leucine--tRNA ligase from Streptococcus suis (strain 98HAH33).